Reading from the N-terminus, the 1697-residue chain is MAFRPFGKDLGPMSSKPAPFTPFGASSTTRLYLSFLFLHTANVGFACSDSSIQPPASQNHSAFAGQSFGPGGIRSGPSIQRAPPLSASQNPQLSIGKPYRPGGVQSVPPINRIPSPSAFQNPSPSSGQPYQPGGIQRIPEPFNGIAWGPEASRTSPSVRPYQFPGVQRPNLNPQYGHDGSRNFLKDHGEHSRATSPPATSHILSRMGTDAVEIGRSQDSKRKSRSDILPDQNMGFSRRNQSPVSGFENGNLVDGFQPLSSRTWMRSPSSAENNPVRSRSNPNQLIHQEQTGNSSFPYAHEVAEIQEATRRKSSAVAPSDKPLGDDPILSQHDSQRFSTSPPTSGTKSYTLSRSSDSQFPGQPSSVNSFNNARKTNSSPATKRTRSPPVYPIEEDIPRNSFPSQDCTEGEEQARAKRLARFKGELEPIADRPVDIQLTKSPVNKTMKPLDNKQTFNSLESSRDALKGDALPDYENSEQPSLIIGVCPDMCPESERGERERKGDLDHYERVDGDRNQTSKSLAVKKYTRTAEREAILIRPMPILQNTMEYLLSLLDRPYNENFLGMYNFLWDRMRAIRMDLRMQHIFNQEAITLLEQMIRLHIIAMHELCEYTKGEGFSEGFDAHLNIEQMNKTSVELFQMYDDHRKKGITVPTEKEFRGYYALLKLDKHPGYKVEPSELSLDLANMTPEIRQTSEVLFARNVARACRTGNFIAFFRLARKASYLQACLMHAHFSKLRTQALASLHSGLQINQGLPVSDMSNWIGMEEEDIEALLEYHGFSIKVFEEPYMVKNDLFLHADKDYKTKCSKLVHMKKSRTIVEDVSAPTVVEDVSTPFPLPSLITEATIGNQQCITAHKHEMPPARSLKKQTSMRLFDKEVADSKTSLLAEEDKPMGTFVMNPPGPFVINPVVHQEKQNDLTSAGGFHSPVKLYSPFGSPKFPQTKSSNLEKQPNDDRIGMSPGEIKFSIIGDVYTNHVPGPALQQSPKSMPMEIMPVTTIAECPTSVENKYALEESVPEAAMICTLEKEFNDIDEEDEDEDGVILNQYDEEVAKAKLKLIIRLWKRWSSRQSELRERRQLAAAAALNSLSLGTPIRFSKTDQSRACGEFNIDQAMRRRFEEREKSWSRLNISDVIADILVGRNPESKCISWKVVLCTQTKSVNSSSSASQVTHSAASRWLSSKLMPHAEHSSLNDDNLLFSAPGVSVWNKWVANGSDIDFTCCLSVARDVEAENDMCETTCGASAVLFLASGGLPLNLQREQLNLILESVPNGSVLPLLVVISSCNGEHMEPDTDIVSGLGLHDIDKSKIASFSIVSIANKSQKGQEVHFFNDSRLRDGFKWLASNSPLQPNLHHVKLRELFLTHFSFSLELLKQMPDQEVGPNICISAFNDALETSRRNITSAAEANPIGWPCPETMLLEDNRKECLMVKRYLPNLDWSSAENVELLSSVLENCKLPDFEDDLTWLTVGCASGAEIENHTQRLEGCLIEYLTQRSNLMGVSLATKETGVMLERNTRLELHNSSRYHITPRWIGIFQRIFNWRIMGLFDASSSSAYVLKSDLNMSTSSYADKFLAEDASYPSCPPNLPLLHEMIEISCSPLKSPPPYDDKAQRVVETGMLIDDHRDIEESMLEKNREACRGIDLMITEDDELGERSWRSKGREAAEKKTIEKRESERLDELLEKCNMVQNSIAEKLCIYF.

4 disordered regions span residues 54–134 (PPAS…QPGG), 167–280 (QRPN…SRSN), 306–413 (EATR…EQAR), and 491–512 (ESERGERERKGDLDHYERVDGD). Positions 120-134 (QNPSPSSGQPYQPGG) are enriched in low complexity. A compositionally biased stretch (basic and acidic residues) spans 178–192 (DGSRNFLKDHGEHSR). Over residues 193 to 202 (ATSPPATSHI) the composition is skewed to polar residues. Residues 215–227 (RSQDSKRKSRSDI) are compositionally biased toward basic and acidic residues. 3 stretches are compositionally biased toward polar residues: residues 233–243 (MGFSRRNQSPV), 257–280 (PLSSRTWMRSPSSAENNPVRSRSN), and 335–380 (RFST…SPAT). Positions 625–813 (NIEQMNKTSV…KCSKLVHMKK (189 aa)) constitute a PCI domain.

It belongs to the SAC3 family. As to quaternary structure, interacts with SAC3A, EER5 and CML19. Interacts with UCH1 and UCH2.

Its subcellular location is the nucleus. Functionally, component of the TREX-2 complex (transcription and export complex 2), a muliprotein complex that functions in docking export-competent ribonucleoprotein particles (mRNPs) to the nuclear entrance of the nuclear pore complex (nuclear basket). TREX-2 participates in mRNA export and accurate chromatin positioning in the nucleus by tethering genes to the nuclear periphery. This is SAC3 family protein B from Arabidopsis thaliana (Mouse-ear cress).